The primary structure comprises 547 residues: Chaperonin GroEL (547 aa).

ATP is bound by residues 30–33 (TLGP), Lys51, 87–91 (DGTTT), Gly415, and Asp495.

Belongs to the chaperonin (HSP60) family. In terms of assembly, forms a cylinder of 14 subunits composed of two heptameric rings stacked back-to-back. Interacts with the co-chaperonin GroES.

It localises to the cytoplasm. The catalysed reaction is ATP + H2O + a folded polypeptide = ADP + phosphate + an unfolded polypeptide.. In terms of biological role, together with its co-chaperonin GroES, plays an essential role in assisting protein folding. The GroEL-GroES system forms a nano-cage that allows encapsulation of the non-native substrate proteins and provides a physical environment optimized to promote and accelerate protein folding. The polypeptide is Chaperonin GroEL (Rhizobium leguminosarum bv. trifolii (strain WSM2304)).